The chain runs to 169 residues: Peptide deformylase 1 (169 aa).

2 residues coordinate Fe cation: Cys-93 and His-135. The active site involves Glu-136. His-139 contacts Fe cation.

Belongs to the polypeptide deformylase family. Fe(2+) is required as a cofactor.

It catalyses the reaction N-terminal N-formyl-L-methionyl-[peptide] + H2O = N-terminal L-methionyl-[peptide] + formate. In terms of biological role, removes the formyl group from the N-terminal Met of newly synthesized proteins. Requires at least a dipeptide for an efficient rate of reaction. N-terminal L-methionine is a prerequisite for activity but the enzyme has broad specificity at other positions. The protein is Peptide deformylase 1 of Corynebacterium efficiens (strain DSM 44549 / YS-314 / AJ 12310 / JCM 11189 / NBRC 100395).